The sequence spans 293 residues: Ribosomal protein L11 methyltransferase (293 aa).

The S-adenosyl-L-methionine site is built by Thr145, Gly166, Asp188, and Asn230.

The protein belongs to the methyltransferase superfamily. PrmA family.

The protein resides in the cytoplasm. The catalysed reaction is L-lysyl-[protein] + 3 S-adenosyl-L-methionine = N(6),N(6),N(6)-trimethyl-L-lysyl-[protein] + 3 S-adenosyl-L-homocysteine + 3 H(+). Its function is as follows. Methylates ribosomal protein L11. The sequence is that of Ribosomal protein L11 methyltransferase from Escherichia coli (strain SMS-3-5 / SECEC).